The sequence spans 726 residues: WD repeat and coiled-coil-containing protein (726 aa).

WD repeat units lie at residues 55 to 98 and 154 to 194; these read GQFE…LDKN and KSSG…LNAC. The disordered stretch occupies residues 503 to 571; it reads SYDGDQSPTS…SSPPNFIKHG (69 aa). Residues 506–515 show a composition bias toward polar residues; that stretch reads GDQSPTSSAN. A compositionally biased stretch (basic and acidic residues) spans 517–535; the sequence is FDDKRSKLRVESLDTEPKN. Over residues 550 to 565 the composition is skewed to polar residues; it reads SRPTSPKSECQKSSPP. Residues 581 to 609 are a coiled coil; it reads SISRNVERLCCNFAHLQQHLSELTDITRN.

The sequence is that of WD repeat and coiled-coil-containing protein (wdcp) from Xenopus tropicalis (Western clawed frog).